The primary structure comprises 263 residues: 5'-nucleotidase SurE (263 aa).

A divalent metal cation is bound by residues Asp8, Asp9, Ser43, and Asn96.

The protein belongs to the SurE nucleotidase family. The cofactor is a divalent metal cation.

It localises to the cytoplasm. It catalyses the reaction a ribonucleoside 5'-phosphate + H2O = a ribonucleoside + phosphate. Its function is as follows. Nucleotidase that shows phosphatase activity on nucleoside 5'-monophosphates. The polypeptide is 5'-nucleotidase SurE (Jannaschia sp. (strain CCS1)).